The sequence spans 929 residues: SCY1-like protein 2 (929 aa).

The Protein kinase domain occupies 32 to 327 (FDVGRHIASG…ADQMTKIPFF (296 aa)). The HEAT repeat unit spans residues 443 to 479 (DEIKNSVLPMVYRALEAPSIQIQELCLNIIPTFANLI). Residues 661-701 (ESENKEDGLQNKHKRASLTLEEKQKLAKEQEQAQKLKSQQP) adopt a coiled-coil conformation. S677 is subject to Phosphoserine. The segment covering 684 to 694 (QKLAKEQEQAQ) has biased composition (basic and acidic residues). Disordered regions lie at residues 684–709 (QKLAKEQEQAQKLKSQQPLKPQVHTP) and 906–929 (NFAQPPTTMTNSSSASNDLKDLFG). Positions 695–705 (KLKSQQPLKPQ) are enriched in low complexity. The segment at 699–929 (QQPLKPQVHT…ASNDLKDLFG (231 aa)) is necessary for interaction with AP2 complex and clathrin, interaction with clathrin is necessary for its targeting to the TGN and endosomal membranes. Position 708 is a phosphothreonine (T708). Over residues 912–922 (TTMTNSSSASN) the composition is skewed to polar residues.

It belongs to the protein kinase superfamily. As to quaternary structure, interacts with clathrin and AP2B1; the interaction mediates the association with the AP-2 complex. In terms of processing, could autophosphorylate in presence of poly-L-lysine.

Its subcellular location is the cytoplasmic vesicle. It localises to the clathrin-coated vesicle. It is found in the golgi apparatus. The protein localises to the trans-Golgi network membrane. The protein resides in the endosome membrane. Component of the AP2-containing clathrin coat that may regulate clathrin-dependent trafficking at plasma membrane, TGN and endosomal system. A possible serine/threonine-protein kinase toward the beta2-subunit of the plasma membrane adapter complex AP2 and other proteins in presence of poly-L-lysine has not been confirmed. By regulating the expression of excitatory receptors at synapses, plays an essential role in neuronal function and signaling and in brain development. The sequence is that of SCY1-like protein 2 from Homo sapiens (Human).